The sequence spans 315 residues: Alpha- and gamma-adaptin-binding protein p34 (315 aa).

The segment at 197-233 (IGSADPCHPEQPHLPAADRTESLSDHRGGASNTTDAQ) is disordered. Residues 203-224 (CHPEQPHLPAADRTESLSDHRG) are compositionally biased toward basic and acidic residues. A phosphoserine mark is found at serine 310 and serine 311.

As to quaternary structure, associated with AP-1 and AP-2 complexes.

It localises to the cytoplasm. Its subcellular location is the cytosol. In terms of biological role, may be involved in endocytic recycling of growth factor receptors such as EGFR. The chain is Alpha- and gamma-adaptin-binding protein p34 (AAGAB) from Pongo abelii (Sumatran orangutan).